A 139-amino-acid polypeptide reads, in one-letter code: UPF0216 protein MJ1224 (139 aa).

Belongs to the UPF0216 family.

The chain is UPF0216 protein MJ1224 from Methanocaldococcus jannaschii (strain ATCC 43067 / DSM 2661 / JAL-1 / JCM 10045 / NBRC 100440) (Methanococcus jannaschii).